The following is a 2444-amino-acid chain: Protein SON (2444 aa).

Residue A2 is modified to N-acetylalanine. K16 is modified (N6-acetyllysine). Residues 23–37 (ELSSGRSEGQLNGET) show a composition bias toward polar residues. The disordered stretch occupies residues 23 to 58 (ELSSGRSEGQLNGETNPPIEGNQAGDTAASARSLPN). K64 is covalently cross-linked (Glycyl lysine isopeptide (Lys-Gly) (interchain with G-Cter in SUMO2)). Over residues 79–88 (YKPDLKEASR) the composition is skewed to basic and acidic residues. The segment at 79–155 (YKPDLKEASR…GNLESDSFLK (77 aa)) is disordered. S94 is modified (phosphoserine). Residues 106–130 (KKSKKHKKHKNKKKKKKKEKEKKYK) show a composition bias toward basic residues. The segment covering 131–155 (RQPEESESKLKSHHDGNLESDSFLK) has biased composition (basic and acidic residues). S142, S150, S152, and S158 each carry phosphoserine. K284 carries the post-translational modification N6-acetyllysine. 2 disordered regions span residues 301–358 (TLTI…ESLE) and 391–468 (GPPV…PEPP). 2 stretches are compositionally biased toward pro residues: residues 393-406 (PVTP…PSAT) and 420-439 (PELP…PSVT). T395 is modified (phosphothreonine). The tract at residues 721 to 850 (LASNTMDSQM…LATSSMDSQM (130 aa)) is 13 X 10 AA tandem repeats of L-A-[ST]-[NSG]-[TS]-MDSQM. The segment at 907–983 (DPYRLAQDPY…IAPRPYRLAP (77 aa)) is 11 X 7 AA tandem repeats of [DR]-P-Y-R-[LI][AG][QHP]. R945 carries the omega-N-methylarginine modification. T954 carries the post-translational modification Phosphothreonine. At S993 the chain carries Phosphoserine. 14 tandem repeats follow at residues 1001–1006 (ERSMMS), 1009–1014 (ERSMMS), 1016–1021 (ERSMMS), 1025–1030 (ERSMMS), 1033–1038 (ERSMMS), 1041–1046 (ERSMMS), 1050–1055 (ERSMMS), 1058–1063 (ERSMMS), 1066–1071 (ERSMMS), 1075–1080 (DRSMMS), 1084–1089 (DRSMMS), 1095–1100 (DRSMMS), 1106–1111 (DRSMMS), and 1115–1120 (DRSMMS). Positions 1001 to 1120 (ERSMMSSYER…SSYTDRSMMS (120 aa)) are 14 X 6 AA repeats of [ED]-R-S-M-M-S. R1002 is modified (asymmetric dimethylarginine). Asymmetric dimethylarginine is present on R1017. Residues S1030 and S1038 each carry the phosphoserine modification. 2 positions are modified to phosphoserine: S1055 and S1063. Residue S1077 is modified to Phosphoserine. Pro residues predominate over residues 1141 to 1168 (PPLPPEEPPTMPPLPPEEPPMTPPLPPE). A 3 X 11 AA tandem repats of P-P-L-P-P-E-E-P-P-[TME]-[MTG] region spans residues 1141-1173 (PPLPPEEPPTMPPLPPEEPPMTPPLPPEEPPEG). The segment at 1141 to 1213 (PPLPPEEPPT…PEPPVSQSEI (73 aa)) is disordered. Over residues 1177 to 1213 (STEQSALTADNTWSTEVTLSTGESLSQPEPPVSQSEI) the composition is skewed to polar residues. A phosphoserine mark is found at S1678, S1723, S1727, S1772, S1784, S1791, S1794, S1807, and S1808. Positions 1802-2072 (ERASESSSEE…RSPKRLTDLD (271 aa)) are disordered. Composition is skewed to basic and acidic residues over residues 1815 to 1826 (YEIFVKVKDTHE), 1834 to 1847 (RDKG…DSSL), and 1855 to 1870 (KSSE…ESRS). Basic residues-rich tracts occupy residues 1871 to 1934 (RARK…RKRS) and 1942 to 1973 (AARA…RRRS). Repeat copies occupy residues 1950 to 1956 (PSRRSRS), 1959 to 1977 (PSRR…FSIS), 1978 to 1984 (PSRRSRT), 1985 to 1991 (PSRRSRT), 1992 to 1998 (PSRRSRT), 1999 to 2005 (PSRRSRT), and 2006 to 2012 (PSRRSRT). The segment at 1950–2019 (PSRRSRSHTP…SRTPSRRRRS (70 aa)) is 7 X 7 AA repeats of P-S-R-R-S-R-[TS]. A 2 X 19 AA repeats of P-S-R-R-R-R-S-R-S-V-V-R-R-R-S-F-S-I-S region spans residues 1959-2030 (PSRRRRSRSV…SAVRRRSFSI (72 aa)). Phosphoserine occurs at positions 1973, 1975, and 1977. Positions 1980-2027 (RRSRTPSRRSRTPSRRSRTPSRRSRTPSRRSRTPSRRRRSRSAVRRRS) are enriched in basic residues. The stretch at 2013 to 2019 (PSRRRRS) is one 2-7; approximate repeat. Residues 2020 to 2030 (RSAVRRRSFSI) form a 3-2; approximate repeat. Phosphoserine is present on residues S2027, S2029, S2031, S2047, and S2049. The tract at residues 2031–2057 (SPVRLRRSRTPLRRRFSRSPIRRKRSR) is 3 X tandem repeats of [ST]-P-[VLI]-R-[RL]-[RK]-[RF]-S-R. Positions 2034–2056 (RLRRSRTPLRRRFSRSPIRRKRS) are enriched in basic residues. Basic and acidic residues predominate over residues 2057–2072 (RSSERGRSPKRLTDLD). At K2073 the chain carries N6-acetyllysine; alternate. K2073 is covalently cross-linked (Glycyl lysine isopeptide (Lys-Gly) (interchain with G-Cter in SUMO2); alternate). A Glycyl lysine isopeptide (Lys-Gly) (interchain with G-Cter in SUMO2) cross-link involves residue K2110. Phosphoserine is present on S2147. K2167 participates in a covalent cross-link: Glycyl lysine isopeptide (Lys-Gly) (interchain with G-Cter in SUMO2). A Phosphothreonine modification is found at T2181. A disordered region spans residues 2192 to 2238 (EFPVSSGSQHRKKEADSVYGEWVPVEKNGEESKDDDNVFSSSLPSEP). A Phosphoserine modification is found at S2256. The 47-residue stretch at 2323-2369 (TGGMGAVLMRKMGWREGEGLGKNKEGNKEPILVDFKTDRKGLVAVGE) folds into the G-patch domain. Residues 2389–2444 (HPVSALMEICNKRRWQPPEFLLVHDSGPDHRKHFLFRVLRNGSPYQPNCMFFLNRY) enclose the DRBM domain.

As to quaternary structure, interacts with SRSF2. Associates with the spliceosome. Interacts with USH1G. Widely expressed. Highly expressed in brain, heart, spleen, liver, skeletal muscle, kidney and testis.

It is found in the nucleus speckle. RNA-binding protein that acts as a mRNA splicing cofactor by promoting efficient splicing of transcripts that possess weak splice sites. Specifically promotes splicing of many cell-cycle and DNA-repair transcripts that possess weak splice sites, such as TUBG1, KATNB1, TUBGCP2, AURKB, PCNT, AKT1, RAD23A, and FANCG. Probably acts by facilitating the interaction between Serine/arginine-rich proteins such as SRSF2 and the RNA polymerase II. Also binds to DNA; binds to the consensus DNA sequence: 5'-GA[GT]AN[CG][AG]CC-3'. Essential for correct RNA splicing of multiple genes critical for brain development, neuronal migration and metabolism, including TUBG1, FLNA, PNKP, WDR62, PSMD3, PCK2, PFKL, IDH2, and ACY1. May also regulate the ghrelin signaling in hypothalamic neuron by acting as a negative regulator of GHSR expression. The protein is Protein SON (Son) of Mus musculus (Mouse).